Here is a 127-residue protein sequence, read N- to C-terminus: Protein ApaG (127 aa).

Positions 3 to 127 (DDPRYRVEVE…FVLSVPRTLH (125 aa)) constitute an ApaG domain.

This Xanthomonas euvesicatoria pv. vesicatoria (strain 85-10) (Xanthomonas campestris pv. vesicatoria) protein is Protein ApaG.